The primary structure comprises 297 residues: Dehydrodolichyl diphosphate synthase complex subunit Nus1 (297 aa).

A run of 2 helical transmembrane segments spans residues 7 to 26 and 40 to 56; these read LVWRVLHALLCLHLTLTSWL and CCRAASAAVLAPLGFTL. Residues 63–73 show a composition bias toward basic residues; sequence GRNRRHHRHPH. A disordered region spans residues 63-86; the sequence is GRNRRHHRHPHGGPGPGPGPAATH. A helical transmembrane segment spans residues 121 to 139; that stretch reads IASLVVWCMAVGISYISVY. N-linked (GlcNAc...) asparagine glycans are attached at residues Asn148 and Asn275. The RXG motif; crucial for prenyltransferase activity motif lies at 294-296; it reads RLG. Residues Leu295 and Gly296 each contribute to the isopentenyl diphosphate site.

It belongs to the UPP synthase family. The active dehydrodolichyl diphosphate synthase complex is a heterotetramer composed of a dimer of heterodimer of DHDDS and NUS1. Interacts with NPC2. Requires Mg(2+) as cofactor. Highly expressed in heart, liver, kidney and pancreas.

It is found in the endoplasmic reticulum membrane. It carries out the reaction n isopentenyl diphosphate + (2E,6E)-farnesyl diphosphate = a di-trans,poly-cis-polyprenyl diphosphate + n diphosphate. It functions in the pathway protein modification; protein glycosylation. The protein operates within lipid metabolism. With DHDDS, forms the dehydrodolichyl diphosphate synthase (DDS) complex, an essential component of the dolichol monophosphate (Dol-P) biosynthetic machinery. Both subunits contribute to enzymatic activity, i.e. condensation of multiple copies of isopentenyl pyrophosphate (IPP) to farnesyl pyrophosphate (FPP) to produce dehydrodolichyl diphosphate (Dedol-PP), a precursor of dolichol phosphate which is utilized as a sugar carrier in protein glycosylation in the endoplasmic reticulum (ER). Synthesizes long-chain polyprenols, mostly of C95 and C100 chain length. Regulates the glycosylation and stability of nascent NPC2, thereby promoting trafficking of LDL-derived cholesterol. Acts as a specific receptor for the N-terminus of Nogo-B, a neural and cardiovascular regulator. The protein is Dehydrodolichyl diphosphate synthase complex subunit Nus1 of Mus musculus (Mouse).